The following is a 545-amino-acid chain: MTKFIFVTGGVVSSIGKGIVAASLGRLLKSRGYSVSILKLDPYINIDPGTMSPFQHGEVFVTQDGAETDLDLGHYERFTDTSMSRLNCVTTGSIYQAVINKERRGDYNGGTVQVIPHITNEIKERILRVAKSTNPSVVITEIGGTVGDIESLPFLEAIRQFRKEVGRQHVLYMHVTLVPWIASAGEMKTKPTQHSVKELRSIGIQPDILVCRSDRPLPKGLKQKLSGFCDVPEECVITSQDAKSIYEVPLNLEREGMAEQVLNLLQMEQRQPDLTQWQTLVQRLHTPKHELEIAIVGKYVQLSDAYLSVVEALNHAAISTYGKLRLRWVNSEDLENESAETHLGGVDGVVVPGGFGVRGVDGKIAAIKYARDRQIPFLGLCLGMQCSVIEWARNIGGLTDANSAEFDPHTTNPVINLLPGQQEVVDLGGTMRLGLYPCRVLPDTLAFKLYQEDVIYERHRHRYEFNNAYRDLLLKSGYAISGTSPDGQLVEIVELPKHPFFLACQFHPEFQSRPSSPHPLFKGFIQAAIALSLSTSTTPTPLEVS.

The tract at residues 1–267 is amidoligase domain; it reads MTKFIFVTGG…AEQVLNLLQM (267 aa). S13 serves as a coordination point for CTP. A UTP-binding site is contributed by S13. ATP contacts are provided by residues 14 to 19 and D71; that span reads SIGKGI. Positions 71 and 141 each coordinate Mg(2+). CTP-binding positions include 148–150, 188–193, and K224; these read DIE and KTKPTQ. Residues 188-193 and K224 each bind UTP; that span reads KTKPTQ. Positions 292–534 constitute a Glutamine amidotransferase type-1 domain; sequence EIAIVGKYVQ…IQAAIALSLS (243 aa). G354 provides a ligand contact to L-glutamine. Catalysis depends on C381, which acts as the Nucleophile; for glutamine hydrolysis. L-glutamine contacts are provided by residues 382–385, E405, and R462; that span reads LGMQ. Catalysis depends on residues H507 and E509.

It belongs to the CTP synthase family. As to quaternary structure, homotetramer.

It carries out the reaction UTP + L-glutamine + ATP + H2O = CTP + L-glutamate + ADP + phosphate + 2 H(+). The enzyme catalyses L-glutamine + H2O = L-glutamate + NH4(+). The catalysed reaction is UTP + NH4(+) + ATP = CTP + ADP + phosphate + 2 H(+). It participates in pyrimidine metabolism; CTP biosynthesis via de novo pathway; CTP from UDP: step 2/2. With respect to regulation, allosterically activated by GTP, when glutamine is the substrate; GTP has no effect on the reaction when ammonia is the substrate. The allosteric effector GTP functions by stabilizing the protein conformation that binds the tetrahedral intermediate(s) formed during glutamine hydrolysis. Inhibited by the product CTP, via allosteric rather than competitive inhibition. Its function is as follows. Catalyzes the ATP-dependent amination of UTP to CTP with either L-glutamine or ammonia as the source of nitrogen. Regulates intracellular CTP levels through interactions with the four ribonucleotide triphosphates. The chain is CTP synthase from Nostoc punctiforme (strain ATCC 29133 / PCC 73102).